Reading from the N-terminus, the 29-residue chain is Cycloviolacin-H2 (29 aa).

Positions serine 1–asparagine 29 form a cross-link, cyclopeptide (Ser-Asn). Intrachain disulfides connect cysteine 5/cysteine 19, cysteine 9/cysteine 21, and cysteine 14/cysteine 26.

In terms of processing, this is a cyclic peptide.

Its function is as follows. Probably participates in a plant defense mechanism. This chain is Cycloviolacin-H2, found in Viola hederacea (Australian violet).